The chain runs to 155 residues: Small ribosomal subunit protein uS7cz/uS7cy (155 aa).

It belongs to the universal ribosomal protein uS7 family. As to quaternary structure, part of the 30S ribosomal subunit.

The protein resides in the plastid. The protein localises to the chloroplast. In terms of biological role, one of the primary rRNA binding proteins, it binds directly to 16S rRNA where it nucleates assembly of the head domain of the 30S subunit. This chain is Small ribosomal subunit protein uS7cz/uS7cy (rps7-A), found in Pelargonium hortorum (Common geranium).